Consider the following 176-residue polypeptide: NAD(P)H-quinone oxidoreductase subunit 6, chloroplastic (176 aa).

Helical transmembrane passes span 10–30, 32–52, 61–81, 95–115, and 152–172; these read FILV…VLLP, PIYS…LYIL, AQLL…VMFL, VGDG…ITTI, and FLIP…GAIA.

It belongs to the complex I subunit 6 family. As to quaternary structure, NDH is composed of at least 16 different subunits, 5 of which are encoded in the nucleus.

Its subcellular location is the plastid. The protein resides in the chloroplast thylakoid membrane. It catalyses the reaction a plastoquinone + NADH + (n+1) H(+)(in) = a plastoquinol + NAD(+) + n H(+)(out). The catalysed reaction is a plastoquinone + NADPH + (n+1) H(+)(in) = a plastoquinol + NADP(+) + n H(+)(out). NDH shuttles electrons from NAD(P)H:plastoquinone, via FMN and iron-sulfur (Fe-S) centers, to quinones in the photosynthetic chain and possibly in a chloroplast respiratory chain. The immediate electron acceptor for the enzyme in this species is believed to be plastoquinone. Couples the redox reaction to proton translocation, and thus conserves the redox energy in a proton gradient. The polypeptide is NAD(P)H-quinone oxidoreductase subunit 6, chloroplastic (ndhG) (Trachelium caeruleum (Blue throatwort)).